A 67-amino-acid chain; its full sequence is Large ribosomal subunit protein bL35 (67 aa).

This sequence belongs to the bacterial ribosomal protein bL35 family.

The protein is Large ribosomal subunit protein bL35 of Rhizobium etli (strain ATCC 51251 / DSM 11541 / JCM 21823 / NBRC 15573 / CFN 42).